A 793-amino-acid chain; its full sequence is Sucrose synthase (793 aa).

Positions 259–738 are GT-B glycosyltransferase; that stretch reads MILNIAIISP…AIKRVTEKYS (480 aa).

Belongs to the glycosyltransferase 1 family. As to quaternary structure, homotetramer.

It carries out the reaction an NDP-alpha-D-glucose + D-fructose = a ribonucleoside 5'-diphosphate + sucrose + H(+). Catalyzes the reversible conversion of sucrose and a nucleotide disphosphate (NDP) into fructose and NDP-glucose; although the reaction is freely reversible in vitro, the physiological reaction seems to be sucrose cleavage. Unlike characterized plant enzymes prefers ADP as a cosubstrate, whereas plants prefer UDP. Its preference for ADP over UDP suggests it may directly link sucrose and glycogen metabolism. This is Sucrose synthase from Melioribacter roseus (strain JCM 17771 / P3M-2).